The following is a 294-amino-acid chain: ATP synthase gamma chain (294 aa).

This sequence belongs to the ATPase gamma chain family. F-type ATPases have 2 components, CF(1) - the catalytic core - and CF(0) - the membrane proton channel. CF(1) has five subunits: alpha(3), beta(3), gamma(1), delta(1), epsilon(1). CF(0) has three main subunits: a, b and c.

Its subcellular location is the cell inner membrane. Its function is as follows. Produces ATP from ADP in the presence of a proton gradient across the membrane. The gamma chain is believed to be important in regulating ATPase activity and the flow of protons through the CF(0) complex. This chain is ATP synthase gamma chain, found in Rhizobium johnstonii (strain DSM 114642 / LMG 32736 / 3841) (Rhizobium leguminosarum bv. viciae).